A 66-amino-acid chain; its full sequence is MAFLKKSLFLVLFLGLVSLSICEEEKRETEEEEHDQEEDDKSEEKRFLSLIPHIVSGVASIAKHFG.

The signal sequence occupies residues Met-1–Cys-22. The propeptide occupies Glu-23–Arg-46. The segment at Glu-25 to Glu-44 is disordered. A compositionally biased stretch (acidic residues) spans Glu-30–Lys-41. Phe-65 is subject to Phenylalanine amide.

In terms of tissue distribution, expressed by the skin glands.

It localises to the secreted. Its subcellular location is the target cell membrane. Functionally, antimicrobial peptide with high activity against Gram-positive bacteria, low activity against Gram-negative bacteria, and moderate activity against fungi. Acts on bacterial biofilms (S.aureus) with the same potency than on bacteria. Acts by causing bacterial membrane disruption inducing leakage of the intracellular content followed by cell death. It adopts an alpha-helical amphipathic structure in membrane environments. Also shows highly potent antiparasitic activity against Leishmania species. Shows low hemolytic activity on horse and human erythrocytes (LC(50)=39 uM). Is also active on human monocytes (IC(50)=23 uM). This chain is Phylloseptin-S1, found in Phyllomedusa sauvagei (Sauvage's leaf frog).